The following is a 397-amino-acid chain: Elongation factor Tu (397 aa).

The region spanning 10 to 207 (KPHVNIGTIG…AVDESIPEPV (198 aa)) is the tr-type G domain. The interval 19–26 (GHVDHGKT) is G1. 19–26 (GHVDHGKT) is a binding site for GTP. Thr26 is a binding site for Mg(2+). Residues 63–67 (GITIN) form a G2 region. Residues 84–87 (DAPG) are G3. GTP is bound by residues 84–88 (DAPGH) and 139–142 (NKSD). Residues 139–142 (NKSD) form a G4 region. A G5 region spans residues 177-179 (SGL).

It belongs to the TRAFAC class translation factor GTPase superfamily. Classic translation factor GTPase family. EF-Tu/EF-1A subfamily. In terms of assembly, monomer.

The protein resides in the cytoplasm. The enzyme catalyses GTP + H2O = GDP + phosphate + H(+). GTP hydrolase that promotes the GTP-dependent binding of aminoacyl-tRNA to the A-site of ribosomes during protein biosynthesis. In Clavibacter michiganensis subsp. michiganensis (strain NCPPB 382), this protein is Elongation factor Tu.